Here is a 131-residue protein sequence, read N- to C-terminus: MATRTQARESVIGLLYAYDLGNDGITKFVDEILEEKKIRNNQKDFALNLFNGTIKNLSQIDENIVSNLNQGTLSDIGSVEKSILRLAIYEILFESLPKAIIINEAIELSKRLASDGAPKFINGLLDKIVKA.

This sequence belongs to the NusB family.

Involved in transcription antitermination. Required for transcription of ribosomal RNA (rRNA) genes. Binds specifically to the boxA antiterminator sequence of the ribosomal RNA (rrn) operons. This is Transcription antitermination protein NusB from Aliarcobacter butzleri (strain RM4018) (Arcobacter butzleri).